We begin with the raw amino-acid sequence, 78 residues long: uncharacterized protein (78 aa).

Residues 13 to 33 traverse the membrane as a helical segment; the sequence is STILILLMSVLILLLSIDILA.

The protein localises to the membrane. This is an uncharacterized protein from Methanocaldococcus jannaschii (strain ATCC 43067 / DSM 2661 / JAL-1 / JCM 10045 / NBRC 100440) (Methanococcus jannaschii).